Here is a 284-residue protein sequence, read N- to C-terminus: 2,3,4,5-tetrahydropyridine-2,6-dicarboxylate N-succinyltransferase (284 aa).

Residues arginine 111 and aspartate 148 each contribute to the substrate site.

It belongs to the transferase hexapeptide repeat family. In terms of assembly, homotrimer.

The protein resides in the cytoplasm. The enzyme catalyses (S)-2,3,4,5-tetrahydrodipicolinate + succinyl-CoA + H2O = (S)-2-succinylamino-6-oxoheptanedioate + CoA. The protein operates within amino-acid biosynthesis; L-lysine biosynthesis via DAP pathway; LL-2,6-diaminopimelate from (S)-tetrahydrodipicolinate (succinylase route): step 1/3. The chain is 2,3,4,5-tetrahydropyridine-2,6-dicarboxylate N-succinyltransferase from Brucella melitensis biotype 2 (strain ATCC 23457).